The following is a 443-amino-acid chain: Glutamate--tRNA ligase 1 (443 aa).

A 'HIGH' region motif is present at residues Pro10 to Asn20. Residues Ala241–Arg245 carry the 'KMSKS' region motif. Lys244 is a binding site for ATP.

This sequence belongs to the class-I aminoacyl-tRNA synthetase family. Glutamate--tRNA ligase type 1 subfamily. Monomer.

The protein localises to the cytoplasm. It carries out the reaction tRNA(Glu) + L-glutamate + ATP = L-glutamyl-tRNA(Glu) + AMP + diphosphate. In terms of biological role, catalyzes the attachment of glutamate to tRNA(Glu) in a two-step reaction: glutamate is first activated by ATP to form Glu-AMP and then transferred to the acceptor end of tRNA(Glu). The polypeptide is Glutamate--tRNA ligase 1 (Ruegeria pomeroyi (strain ATCC 700808 / DSM 15171 / DSS-3) (Silicibacter pomeroyi)).